A 287-amino-acid polypeptide reads, in one-letter code: 4-hydroxybenzoate octaprenyltransferase (287 aa).

7 helical membrane passes run 30 to 50, 92 to 112, 133 to 153, 158 to 178, 207 to 227, 232 to 252, and 266 to 286; these read ALWI…FALG, IAIA…LNGL, FFAI…PMAF, DTVP…SVAY, VLAI…LGAA, WPYW…YTLI, and HNNW…ALAV.

It belongs to the UbiA prenyltransferase family. The cofactor is Mg(2+).

The protein localises to the cell inner membrane. It catalyses the reaction all-trans-octaprenyl diphosphate + 4-hydroxybenzoate = 4-hydroxy-3-(all-trans-octaprenyl)benzoate + diphosphate. Its pathway is cofactor biosynthesis; ubiquinone biosynthesis. Catalyzes the prenylation of para-hydroxybenzoate (PHB) with an all-trans polyprenyl group. Mediates the second step in the final reaction sequence of ubiquinone-8 (UQ-8) biosynthesis, which is the condensation of the polyisoprenoid side chain with PHB, generating the first membrane-bound Q intermediate 3-octaprenyl-4-hydroxybenzoate. The chain is 4-hydroxybenzoate octaprenyltransferase from Burkholderia mallei (strain NCTC 10247).